The following is a 203-amino-acid chain: Enterotoxin-like toxin X (203 aa).

The interval 164–180 is sialic acid-binding motif; sequence YTLESHKELQKNRENVE.

The protein belongs to the staphylococcal/streptococcal toxin family.

The protein resides in the secreted. Plays a role in the inhibition of the host innate immune system. Inhibits phagocytosis and killing by human neutrophils by interacting with multiple neutrophil surface glycoproteins in a sialic acid-dependent manner. This is Enterotoxin-like toxin X from Staphylococcus aureus.